A 400-amino-acid polypeptide reads, in one-letter code: S-adenosylmethionine sensor upstream of mTORC1 (400 aa).

Residues Arg-99, Gly-168, Asp-186, Asp-198, Phe-199, and Ser-240 each contribute to the S-adenosyl-L-methionine site.

Belongs to the BMT2/SAMTOR family. In terms of assembly, interacts with the GATOR1 complex; interaction is disrupted when samtor binds S-adenosyl-L-methionine. Interacts with the KICSTOR complex; interaction is disrupted when samtor binds S-adenosyl-L-methionine.

S-adenosyl-L-methionine-binding protein that acts as an inhibitor of mTORC1 signaling via interaction with the GATOR1 and KICSTOR complexes. Acts as a sensor of S-adenosyl-L-methionine to signal methionine sufficiency to mTORC1: in presence of methionine, binds S-adenosyl-L-methionine, leading to disrupt interaction with the GATOR1 and KICSTOR complexes and promote mTORC1 signaling. Upon methionine starvation, S-adenosyl-L-methionine levels are reduced, thereby promoting the association with GATOR1 and KICSTOR, leading to inhibit mTORC1 signaling. Probably also acts as a S-adenosyl-L-methionine-dependent methyltransferase. This is S-adenosylmethionine sensor upstream of mTORC1 from Xenopus laevis (African clawed frog).